Consider the following 391-residue polypeptide: MVLGFSWLPPEINSARMFAGAGSGPLFAAASAWEGLAADLWASASSFESVLAALTTGPWTGPASMSMAAAASPYVGWLSTVASQAQLAAIQARAAATAFEAALAATVHPTAVTANRVSLASLIAANVLGQNTPAIAATEFDYLEMWAQDVAAMVGYHAGAKSVAATLAPFSLPPVSLAGLAAQVGTQVAGMATTASAAVTPVVEGAMASVPTVMSGMQSLVSQLPLQHASMLFLPVRILTSPITTLASMARESATRLGPPAGGLAAANTPNPSGAAIPAFKPLGGRELGAGMSAGLGQAQLVGSMSVPPTWQGSIPISMASSAMSGLGVPPNPVALTQAAGAAGGGMPMMLMPMSISGAGAGMPGGLMDRDGAGWHVTQARLTVIPRTGVG.

This sequence belongs to the mycobacterial PPE family.

This is an uncharacterized protein from Mycobacterium tuberculosis (strain CDC 1551 / Oshkosh).